The following is a 433-amino-acid chain: Adenosylhomocysteinase B (433 aa).

The substrate site is built by threonine 57, aspartate 132, glutamate 157, lysine 187, and aspartate 191. The interval 184-351 (SVTKSKFDNL…EGRLVNLGCA (168 aa)) is NAD binding.

It belongs to the adenosylhomocysteinase family. As to quaternary structure, homotetramer. It depends on NAD(+) as a cofactor.

The protein localises to the cytoplasm. It carries out the reaction S-adenosyl-L-homocysteine + H2O = L-homocysteine + adenosine. Its pathway is amino-acid biosynthesis; L-homocysteine biosynthesis; L-homocysteine from S-adenosyl-L-homocysteine: step 1/1. In terms of biological role, catalyzes the hydrolysis of S-adenosyl-L-homocysteine to form adenosine and homocysteine. Binds copper ions. This is Adenosylhomocysteinase B (ahcy-b) from Xenopus laevis (African clawed frog).